Reading from the N-terminus, the 60-residue chain is Putative potassium channel blocker TXKS1 (60 aa).

Positions 1–28 (MNRLTTIILMLIVINVIMDDISESKVAA) are cleaved as a signal peptide. Disulfide bonds link Cys-32–Cys-49, Cys-35–Cys-55, and Cys-39–Cys-57. Lys-59 is subject to Lysine amide.

As to expression, expressed by the venom gland.

The protein localises to the secreted. Inhibits potassium channels. This chain is Putative potassium channel blocker TXKS1, found in Olivierus martensii (Manchurian scorpion).